The chain runs to 442 residues: tRNA-2-methylthio-N(6)-dimethylallyladenosine synthase (442 aa).

In terms of domain architecture, MTTase N-terminal spans 2-120 (KKVFIRTFGC…LPKMIVDKET (119 aa)). Residues Cys-11, Cys-49, Cys-83, Cys-157, Cys-161, and Cys-164 each contribute to the [4Fe-4S] cluster site. Positions 143 to 375 (RVEGGAAFVS…NEVIEAETAR (233 aa)) constitute a Radical SAM core domain. One can recognise a TRAM domain in the interval 378-441 (QTMIGTVQRC…TFSLRGKIVE (64 aa)).

The protein belongs to the methylthiotransferase family. MiaB subfamily. Monomer. It depends on [4Fe-4S] cluster as a cofactor.

It localises to the cytoplasm. The catalysed reaction is N(6)-dimethylallyladenosine(37) in tRNA + (sulfur carrier)-SH + AH2 + 2 S-adenosyl-L-methionine = 2-methylsulfanyl-N(6)-dimethylallyladenosine(37) in tRNA + (sulfur carrier)-H + 5'-deoxyadenosine + L-methionine + A + S-adenosyl-L-homocysteine + 2 H(+). Its function is as follows. Catalyzes the methylthiolation of N6-(dimethylallyl)adenosine (i(6)A), leading to the formation of 2-methylthio-N6-(dimethylallyl)adenosine (ms(2)i(6)A) at position 37 in tRNAs that read codons beginning with uridine. This chain is tRNA-2-methylthio-N(6)-dimethylallyladenosine synthase, found in Neisseria meningitidis serogroup A / serotype 4A (strain DSM 15465 / Z2491).